The chain runs to 279 residues: Undecaprenyl-diphosphatase (279 aa).

8 consecutive transmembrane segments (helical) span residues L2–L22, A44–I64, W85–L105, F113–I133, V163–L183, T188–L208, L225–L245, and F255–F275.

It belongs to the UppP family.

The protein resides in the cell membrane. The enzyme catalyses di-trans,octa-cis-undecaprenyl diphosphate + H2O = di-trans,octa-cis-undecaprenyl phosphate + phosphate + H(+). Functionally, catalyzes the dephosphorylation of undecaprenyl diphosphate (UPP). Confers resistance to bacitracin. This is Undecaprenyl-diphosphatase from Streptococcus equi subsp. equi (strain 4047).